Reading from the N-terminus, the 736-residue chain is Polyribonucleotide nucleotidyltransferase (736 aa).

The Mg(2+) site is built by aspartate 488 and aspartate 494. A KH domain is found at 555 to 614; that stretch reads PMVQTLEIQKEKIRDVIGLGGKVIKELCKTFDVEIDISENGEVKVWGNVGENVKKAVQSI. The S1 motif domain occupies 624 to 692; it reads GDIFDGEVVK…HKNRVKLTLR (69 aa).

This sequence belongs to the polyribonucleotide nucleotidyltransferase family. Mg(2+) is required as a cofactor.

The protein resides in the cytoplasm. It carries out the reaction RNA(n+1) + phosphate = RNA(n) + a ribonucleoside 5'-diphosphate. Its function is as follows. Involved in mRNA degradation. Catalyzes the phosphorolysis of single-stranded polyribonucleotides processively in the 3'- to 5'-direction. This Orientia tsutsugamushi (strain Ikeda) (Rickettsia tsutsugamushi) protein is Polyribonucleotide nucleotidyltransferase.